Here is a 200-residue protein sequence, read N- to C-terminus: Ribosome maturation factor RimM (200 aa).

The PRC barrel domain occupies Lys-103 to Leu-181.

This sequence belongs to the RimM family. As to quaternary structure, binds ribosomal protein uS19.

The protein resides in the cytoplasm. In terms of biological role, an accessory protein needed during the final step in the assembly of 30S ribosomal subunit, possibly for assembly of the head region. Essential for efficient processing of 16S rRNA. May be needed both before and after RbfA during the maturation of 16S rRNA. It has affinity for free ribosomal 30S subunits but not for 70S ribosomes. The sequence is that of Ribosome maturation factor RimM from Kosmotoga olearia (strain ATCC BAA-1733 / DSM 21960 / TBF 19.5.1).